The chain runs to 231 residues: MQHTVDIQAIESKLNFTFSHPRLLITALTHPSYRNEFPSAEEDSERLEFLGDAVLGLVVTEHLFLLFPALNEGLLSTTRAALVNAEACFEYTQKLSLGEHLLIGRGEKMQSHRGKISAYANLLEAILGAVYLDGGLSPARQIIVPLLPDKESILPLMLVNPKNRLQQFTQQTLKVLPSYKALPWKSEDGSPGYHVQVFVNGDLWGEGFAGSKKEAEKLAAKQALSTHDNKN.

Residues 7-135 form the RNase III domain; that stretch reads IQAIESKLNF…ILGAVYLDGG (129 aa). Residue glutamate 48 participates in Mg(2+) binding. Residue aspartate 52 is part of the active site. Mg(2+)-binding residues include asparagine 121 and glutamate 124. The active site involves glutamate 124. The DRBM domain occupies 160-229; it reads NPKNRLQQFT…AKQALSTHDN (70 aa).

This sequence belongs to the ribonuclease III family. In terms of assembly, homodimer. Mg(2+) serves as cofactor.

The protein localises to the cytoplasm. The catalysed reaction is Endonucleolytic cleavage to 5'-phosphomonoester.. Functionally, digests double-stranded RNA. Involved in the processing of primary rRNA transcript to yield the immediate precursors to the large and small rRNAs (23S and 16S). Processes some mRNAs, and tRNAs when they are encoded in the rRNA operon. Processes pre-crRNA and tracrRNA of type II CRISPR loci if present in the organism. The sequence is that of Ribonuclease 3 from Chlamydia trachomatis serovar A (strain ATCC VR-571B / DSM 19440 / HAR-13).